Reading from the N-terminus, the 198-residue chain is Na(+)-translocating NADH-quinone reductase subunit E (198 aa).

Helical transmembrane passes span 11 to 31, 39 to 59, 77 to 97, 110 to 130, 140 to 160, and 176 to 196; these read SIFIENMALSFFLGMCTFLAV, FGLGIAVTVVLTISVPVNNLV, FLNFITFIGVIAALVQILEMI, GIFLPLITVNCAIFGGVSFMV, VVYGFGSGVGWMLAIVALAGI, and LGITFITAGLMALGFMSFSGV.

Belongs to the NqrDE/RnfAE family. As to quaternary structure, composed of six subunits; NqrA, NqrB, NqrC, NqrD, NqrE and NqrF.

Its subcellular location is the cell inner membrane. It carries out the reaction a ubiquinone + n Na(+)(in) + NADH + H(+) = a ubiquinol + n Na(+)(out) + NAD(+). Its function is as follows. NQR complex catalyzes the reduction of ubiquinone-1 to ubiquinol by two successive reactions, coupled with the transport of Na(+) ions from the cytoplasm to the periplasm. NqrA to NqrE are probably involved in the second step, the conversion of ubisemiquinone to ubiquinol. This chain is Na(+)-translocating NADH-quinone reductase subunit E, found in Vibrio anguillarum (Listonella anguillarum).